A 211-amino-acid chain; its full sequence is MISFFFKLFQKFINYTDIPLLMATIVFVGRSNVGKSTLIYRLTGKRVRRGKRPGVTRKIIEIEWKNHKIIDMPGFGFMAGLPKEVQERIKDEIVHFIEDNASKIDVAVLVVDGKAAPEIIERWEKRGEIPIDVEFYQFLRELNIPTVVAVNKLDKIKNVQRVVHFLAEKFEVPWDEIDKTFIPISAKFGDNVEKLKNRIYEIIRERRGQRE.

An EngB-type G domain is found at 21 to 205; the sequence is LMATIVFVGR…KNRIYEIIRE (185 aa). Residues 29-36, 54-58, 71-74, 151-154, and 184-186 contribute to the GTP site; these read GRSNVGKS, GVTRK, DMPG, NKLD, and ISA. The Mg(2+) site is built by Ser36 and Thr56.

Belongs to the TRAFAC class TrmE-Era-EngA-EngB-Septin-like GTPase superfamily. EngB GTPase family. The cofactor is Mg(2+).

Functionally, necessary for normal cell division and for the maintenance of normal septation. This is Probable GTP-binding protein EngB from Pyrococcus abyssi (strain GE5 / Orsay).